The following is a 436-amino-acid chain: Septin-7 (436 aa).

Ser2 is modified (N-acetylserine). Tyr29 is subject to Phosphotyrosine. The Septin-type G domain maps to 46–315 (RGFEFTLMVV…ENYRSRKLAA (270 aa)). Residues 46-316 (RGFEFTLMVV…NYRSRKLAAV (271 aa)) form an interaction with SEPTIN12 region. The segment at 56 to 63 (GESGLGKS) is G1 motif. 56–63 (GESGLGKS) contributes to the GTP binding site. Ser76 is modified (phosphoserine). Residues Thr89, Gly115, and 194-202 (KADTLTPEE) contribute to the GTP site. The interval 112–115 (DTPG) is G3 motif. A G4 motif region spans residues 193–196 (AKAD). Thr227 bears the Phosphothreonine mark. The GTP site is built by Gly249 and Arg264. Residues 331-436 (TKSPLAQMEE…EKNKKKGKIF (106 aa)) are a coiled coil. Ser333 bears the Phosphoserine mark. Residue Lys372 is modified to N6-acetyllysine. Basic and acidic residues predominate over residues 377-409 (ELQRRHEQMKKNLEAQHKELEEKRRQFEEEKAN). The tract at residues 377-436 (ELQRRHEQMKKNLEAQHKELEEKRRQFEEEKANWEAQQRILEQQNSSRTLEKNKKKGKIF) is disordered. Phosphoserine is present on Ser423. The residue at position 425 (Thr425) is a Phosphothreonine.

The protein belongs to the TRAFAC class TrmE-Era-EngA-EngB-Septin-like GTPase superfamily. Septin GTPase family. As to quaternary structure, septins polymerize into heterooligomeric protein complexes that form filaments, and associate with cellular membranes, actin filaments and microtubules. GTPase activity is required for filament formation. Filaments are assembled from asymmetrical heterotrimers, composed of SEPTIN2, SEPTIN6 and SEPTIN7 that associate head-to-head to form a hexameric unit. Within the trimer, directly interacts with SEPTIN6, while interaction with SEPTIN2 seems indirect. In the absence of SEPTIN6, forms homodimers. Interacts directly with CENPE and links CENPE to septin filaments composed of SEPTIN2, SEPTIN6 and SEPTIN7. Interacts with SEPTIN5. Component of a septin core octameric complex consisting of SEPTIN12, SEPTIN7, SEPTIN6 and SEPTIN2 or SEPTIN4 in the order 12-7-6-2-2-6-7-12 or 12-7-6-4-4-6-7-12 and located in the sperm annulus; the SEPTIN12:SEPTIN7 association is mediated by the respective GTP-binding domains. Interacts with SEPTIN2, SEPTIN7, SEPTIN8, SEPTIN9 and SEPTIN11.

The protein resides in the cytoplasm. The protein localises to the chromosome. It localises to the centromere. Its subcellular location is the kinetochore. It is found in the cytoskeleton. The protein resides in the spindle. The protein localises to the cleavage furrow. It localises to the midbody. Its subcellular location is the cilium axoneme. It is found in the cell projection. The protein resides in the cilium. The protein localises to the flagellum. Filament-forming cytoskeletal GTPase. Required for normal organization of the actin cytoskeleton. Required for normal progress through mitosis. Involved in cytokinesis. Required for normal association of CENPE with the kinetochore. Plays a role in ciliogenesis and collective cell movements. Forms a filamentous structure with SEPTIN12, SEPTIN6, SEPTIN2 and probably SEPTIN4 at the sperm annulus which is required for the structural integrity and motility of the sperm tail during postmeiotic differentiation. This Rattus norvegicus (Rat) protein is Septin-7.